A 225-amino-acid chain; its full sequence is uncharacterized protein (225 aa).

Residues 32-82 (PKDKKKQNDTENKKKQPKDGENDKQKEQAETQPFEWIQQKDADDKKESNTA) are disordered. 2 stretches are compositionally biased toward basic and acidic residues: residues 37 to 60 (KQND…KEQA) and 69 to 79 (QQKDADDKKES).

It belongs to the MG067/MG068/MG395 family.

This is an uncharacterized protein from Mycoplasma pneumoniae (strain ATCC 29342 / M129 / Subtype 1) (Mycoplasmoides pneumoniae).